We begin with the raw amino-acid sequence, 451 residues long: Gamma-aminobutyric acid receptor subunit alpha-2 (451 aa).

Positions 1-28 are cleaved as a signal peptide; the sequence is MKTKLNSSNMQLLLFVFLAWDPARLVLA. Over 29 to 249 the chain is Extracellular; the sequence is NIQEDEAKNN…MTAHFHLKRK (221 aa). Asn-38 carries an N-linked (GlcNAc...) asparagine glycan. Arg-94 lines the 4-aminobutanoate pocket. An N-linked (GlcNAc...) asparagine glycan is attached at Asn-138. Position 157 (Thr-157) interacts with 4-aminobutanoate. A disulfide bridge links Cys-166 with Cys-180. Residue Asn-201 is glycosylated (N-linked (GlcNAc...) asparagine). A helical transmembrane segment spans residues 250–270; that stretch reads IGYFVIQTYLPCIMTVILSQV. Residues 271–280 are Cytoplasmic-facing; it reads SFWLNRESVP. Residues 281 to 300 form a helical membrane-spanning segment; it reads ARTVFGVTTVLTMTTLSISA. At 301–311 the chain is on the extracellular side; sequence RNSLPKVAYAT. Residues 312–332 traverse the membrane as a helical segment; it reads AMDWFIAVCYAFVFSALIEFA. Residues 333 to 420 are Cytoplasmic-facing; the sequence is TVNYFTKRGW…FNSVSKIDRM (88 aa). The helical transmembrane segment at 421 to 441 threads the bilayer; it reads SRIVFPVLFGTFNLVYWATYL. The Extracellular portion of the chain corresponds to 442-451; it reads NREPVLGVSP.

It belongs to the ligand-gated ion channel (TC 1.A.9) family. Gamma-aminobutyric acid receptor (TC 1.A.9.5) subfamily. GABRA2 sub-subfamily. As to quaternary structure, heteropentamer, formed by a combination of alpha (GABRA1-6), beta (GABRB1-3), gamma (GABRG1-3), delta (GABRD), epsilon (GABRE), rho (GABRR1-3), pi (GABRP) and theta (GABRQ) subunits, each subunit exhibiting distinct physiological and pharmacological properties. Interacts with UBQLN1. Interacts with KIF21B. Interacts with LHFPL4. Interacts with SHISA7; interaction leads to the regulation of GABA(A) receptor trafficking, channel deactivation kinetics and pharmacology. Post-translationally, glycosylated.

It is found in the postsynaptic cell membrane. The protein resides in the cell membrane. Its subcellular location is the cytoplasmic vesicle membrane. The protein localises to the cell projection. It localises to the dendrite. The catalysed reaction is chloride(in) = chloride(out). Activated by pentobarbital. Inhibited by the antagonist bicuculline. Alpha subunit of the heteropentameric ligand-gated chloride channel gated by gamma-aminobutyric acid (GABA), a major inhibitory neurotransmitter in the brain. GABA-gated chloride channels, also named GABA(A) receptors (GABAAR), consist of five subunits arranged around a central pore and contain GABA active binding site(s) located at the alpha and beta subunit interface(s). When activated by GABA, GABAARs selectively allow the flow of chloride anions across the cell membrane down their electrochemical gradient. Chloride influx into the postsynaptic neuron following GABAAR opening decreases the neuron ability to generate a new action potential, thereby reducing nerve transmission. The alpha-2 subunit exhibits synaptogenic activity together with beta-2 and very little to no activity together with beta-3, the gamma-2 subunit being necessary but not sufficient to induce rapid synaptic contacts formation. This chain is Gamma-aminobutyric acid receptor subunit alpha-2 (GABRA2), found in Bos taurus (Bovine).